Consider the following 215-residue polypeptide: Glutathione S-transferase D2 (215 aa).

Residues 1 to 80 enclose the GST N-terminal domain; that stretch reads MDFYYMPGGG…YLVEKYGKDD (80 aa). Glutathione contacts are provided by residues 50-52 and 64-66; these read HTI and ESR. The GST C-terminal domain occupies 86 to 212; that stretch reads DPKKRAVINQ…MKALFDARKL (127 aa).

Belongs to the GST superfamily. Delta family. Homodimer.

It catalyses the reaction RX + glutathione = an S-substituted glutathione + a halide anion + H(+). Its function is as follows. Conjugation of reduced glutathione to a wide number of exogenous and endogenous hydrophobic electrophiles. May be involved in detoxification. The chain is Glutathione S-transferase D2 from Drosophila melanogaster (Fruit fly).